We begin with the raw amino-acid sequence, 405 residues long: Tryptophan synthase beta chain (405 aa).

Residue K96 is modified to N6-(pyridoxal phosphate)lysine.

This sequence belongs to the TrpB family. As to quaternary structure, tetramer of two alpha and two beta chains. The cofactor is pyridoxal 5'-phosphate.

The enzyme catalyses (1S,2R)-1-C-(indol-3-yl)glycerol 3-phosphate + L-serine = D-glyceraldehyde 3-phosphate + L-tryptophan + H2O. It functions in the pathway amino-acid biosynthesis; L-tryptophan biosynthesis; L-tryptophan from chorismate: step 5/5. The beta subunit is responsible for the synthesis of L-tryptophan from indole and L-serine. The chain is Tryptophan synthase beta chain from Clostridium botulinum (strain Eklund 17B / Type B).